The following is a 175-amino-acid chain: Cyclic pyranopterin monophosphate synthase (175 aa).

Residues 78–80 (LCH) and 125–126 (ME) contribute to the substrate site. Residue aspartate 140 is part of the active site.

The protein belongs to the MoaC family. As to quaternary structure, homohexamer; trimer of dimers.

The enzyme catalyses (8S)-3',8-cyclo-7,8-dihydroguanosine 5'-triphosphate = cyclic pyranopterin phosphate + diphosphate. Its pathway is cofactor biosynthesis; molybdopterin biosynthesis. Catalyzes the conversion of (8S)-3',8-cyclo-7,8-dihydroguanosine 5'-triphosphate to cyclic pyranopterin monophosphate (cPMP). The sequence is that of Cyclic pyranopterin monophosphate synthase from Rhodopirellula baltica (strain DSM 10527 / NCIMB 13988 / SH1).